The primary structure comprises 394 residues: MTSILTNNSAMAALSTLRSISSSMEDTQSRISSGLRVGSASDNAAYWSIATTMRSDNQALSAVQDALGLGAAKVDTAYSGMESAIEVVKEIKAKLVAATEDGVDKAKIQEEITQLKDQLTSIAEAASFSGENWLQADLSGGPVTKSVVGGFVRDSSGAVSVKKVDYSLNTDTVLFDTTGNTGILDKVYNVSQASVTLPVNVNGTTSEYTVGAYNVDDLIDASATFDGDYANVGAGALAGDYVKVQGSWVKAVDVAATGQEVVYDDGTTKWGVDTTVTGAPATNVAAPASIATIDITIAAQAGNLDALIAGVDEALTDMTSAAASLGSISSRIDLQSDFVNKLSDSIDSGVGRLVDADMNEESTRLKALQTQQQLAIQALSIANSDSQNVLSLFR.

The protein belongs to the bacterial flagellin family.

It localises to the secreted. Its subcellular location is the bacterial flagellum. Its function is as follows. Flagellin is the subunit protein which polymerizes to form the filaments of bacterial flagella. Homomer of FlaA is able to form a functional filament. The sequence is that of Flagellin A (flaA) from Rhizobium meliloti (strain 1021) (Ensifer meliloti).